A 43-amino-acid polypeptide reads, in one-letter code: Cytin chain A (43 aa).

This sequence belongs to the protease inhibitor I13 (potato type I serine protease inhibitor) family. As to quaternary structure, heterodimer of an A chain and a B chain, linked by a disulfide bond.

Functionally, inhibitor of chymotrypsin. The chain is Cytin chain A from Theromyzon tessulatum (Duck leech).